The chain runs to 122 residues: Small ribosomal subunit protein uS13 (122 aa).

The tract at residues 95–122 (NLPVRGQRTHTNARTRKGKAKPIAGKKK) is disordered.

The protein belongs to the universal ribosomal protein uS13 family. As to quaternary structure, part of the 30S ribosomal subunit. Forms a loose heterodimer with protein S19. Forms two bridges to the 50S subunit in the 70S ribosome.

Its function is as follows. Located at the top of the head of the 30S subunit, it contacts several helices of the 16S rRNA. In the 70S ribosome it contacts the 23S rRNA (bridge B1a) and protein L5 of the 50S subunit (bridge B1b), connecting the 2 subunits; these bridges are implicated in subunit movement. Contacts the tRNAs in the A and P-sites. The polypeptide is Small ribosomal subunit protein uS13 (Methylobacterium sp. (strain 4-46)).